Here is a 173-residue protein sequence, read N- to C-terminus: Large ribosomal RNA subunit accumulation protein YceD (173 aa).

The protein belongs to the DUF177 domain family.

Plays a role in synthesis, processing and/or stability of 23S rRNA. The polypeptide is Large ribosomal RNA subunit accumulation protein YceD (yceD) (Escherichia coli O157:H7).